Consider the following 641-residue polypeptide: Threonine--tRNA ligase (641 aa).

The 61-residue stretch at 1–61 folds into the TGS domain; sequence MPAITLPDGS…ADDASVRFIT (61 aa). The tract at residues 243–536 is catalytic; the sequence is DHRRIGREMD…LIEQHAGRFP (294 aa). Cys336, His387, and His513 together coordinate Zn(2+).

This sequence belongs to the class-II aminoacyl-tRNA synthetase family. In terms of assembly, homodimer. Zn(2+) serves as cofactor.

The protein resides in the cytoplasm. The catalysed reaction is tRNA(Thr) + L-threonine + ATP = L-threonyl-tRNA(Thr) + AMP + diphosphate + H(+). Its function is as follows. Catalyzes the attachment of threonine to tRNA(Thr) in a two-step reaction: L-threonine is first activated by ATP to form Thr-AMP and then transferred to the acceptor end of tRNA(Thr). Also edits incorrectly charged L-seryl-tRNA(Thr). The chain is Threonine--tRNA ligase from Gluconacetobacter diazotrophicus (strain ATCC 49037 / DSM 5601 / CCUG 37298 / CIP 103539 / LMG 7603 / PAl5).